Reading from the N-terminus, the 757-residue chain is Alcohol dehydrogenase (quinone), dehydrogenase subunit (757 aa).

The signal sequence occupies residues 1–34; the sequence is MTSGLLTPIKVTKKRLLSCAAALAFSAAVPVAFA. Q35 is subject to Pyrrolidone carboxylic acid. E95 is a binding site for pyrroloquinoline quinone. A disulfide bridge links C141 with C142. A pyrroloquinoline quinone-binding site is contributed by R147. Position 215 (E215) interacts with Ca(2+). T277 is a binding site for pyrroloquinoline quinone. The Ca(2+) site is built by N297 and D342. D342 acts as the Proton acceptor in catalysis. Residues K369 and I588 each contribute to the pyrroloquinoline quinone site. A Cytochrome c domain is found at 640-719; the sequence is ARQKDGYFMY…DIRNFIVKRA (80 aa). Residues C653, C656, H657, and M696 each coordinate heme c. Positions 726 to 757 are disordered; that stretch reads EVKARENSTGVPNDQFLNVPQSTADVPTADHP. The span at 732–750 shows a compositional bias: polar residues; the sequence is NSTGVPNDQFLNVPQSTAD.

This sequence belongs to the bacterial PQQ dehydrogenase family. In terms of assembly, the alcohol dehydrogenase multicomponent enzyme system is composed of a dehydrogenase subunit I (AdhA), a cytochrome c subunit II (AdhB) and a subunit III (AdhS). Requires pyrroloquinoline quinone as cofactor. Ca(2+) is required as a cofactor. The cofactor is heme c.

Its subcellular location is the cell membrane. The enzyme catalyses ethanol + a ubiquinone = a ubiquinol + acetaldehyde. 2,6-dichloro-4-dicyanovinylphenol (PC16) and antimycin A inhibit ubiquinol oxidation activity more selectively than the ubiquinone reductase activity. Functionally, dehydrogenase component of the alcohol dehydrogenase multicomponent enzyme system which is involved in the production of acetic acid and in the ethanol oxidase respiratory chain. Quinohemoprotein alcohol dehydrogenase (ADH) catalyzes the oxidation of ethanol to acetaldehyde by transferring electrons to the ubiquinone embedded in the membrane phospholipids. The electrons transfer from ethanol to membranous ubiquinone occurs from pyrroloquinoline quinone (PQQ) to one heme c in subunit I (AdhA), and finally to two heme c in subunit II (AdhB). Besides ubiquinone reduction, ADH also has a ubiquinol (QH2) oxidation reaction which mediates electron transfer from ubiquinol to the non-energy generating bypass oxidase system. The electrons transfer occurs from ubiquinol (QH2) to the additional heme c within subunit II (AdhB). Also able to use quinone analogs such as 2,3-dimethoxy-5-methyl-6-n-decyl-1,4-benzoquinone (DB) and 2,3-dimethoxy-5-methyl-6-n-pentyl-1,4-benzoquinone (PB). In Gluconobacter oxydans (strain 621H) (Gluconobacter suboxydans), this protein is Alcohol dehydrogenase (quinone), dehydrogenase subunit.